A 40-amino-acid polypeptide reads, in one-letter code: Meleagrin (40 aa).

Glutamine 1 carries the post-translational modification Pyrrolidone carboxylic acid. 3 cysteine pairs are disulfide-bonded: cysteine 6-cysteine 33, cysteine 12-cysteine 28, and cysteine 16-cysteine 32.

Belongs to the transferrin family.

This is Meleagrin from Meleagris gallopavo (Wild turkey).